A 521-amino-acid chain; its full sequence is DEAD-box ATP-dependent RNA helicase 1 (521 aa).

The interval 1 to 20 (MVVAMATKEEEGGPSSRVPH) is disordered. A Q motif motif is present at residues 36–65 (CPVAHLPRLDPRLVKPLQRMGIESFFPVQV). Residues 72-302 (IGPGAFERDI…QLELQHPLLL (231 aa)) form the Helicase ATP-binding domain. ATP is bound at residue 85–92 (SPTGSGKT). The short motif at 213-216 (DETD) is the DEAD box element. The 151-residue stretch at 330–480 (SLIVLLQELR…SLPEESVETL (151 aa)) folds into the Helicase C-terminal domain. A compositionally biased stretch (basic and acidic residues) spans 495 to 507 (LESEATKKSKSGD). Positions 495 to 521 (LESEATKKSKSGDKAPNASKRKRTINT) are disordered.

The protein belongs to the DEAD box helicase family. DDX51/DBP6 subfamily.

It carries out the reaction ATP + H2O = ADP + phosphate + H(+). This Oryza sativa subsp. japonica (Rice) protein is DEAD-box ATP-dependent RNA helicase 1.